We begin with the raw amino-acid sequence, 572 residues long: Probable terpene synthase 13 (572 aa).

3 residues coordinate Mg(2+): aspartate 326, aspartate 330, and glutamate 478. A DDXXD motif motif is present at residues 326–330 (DDIFD).

It belongs to the terpene synthase family. Mg(2+) serves as cofactor.

In terms of biological role, probable sesquiterpene synthase. In Ricinus communis (Castor bean), this protein is Probable terpene synthase 13 (TPS13).